We begin with the raw amino-acid sequence, 141 residues long: Nucleoside triphosphatase NudI (141 aa).

The 141-residue stretch at 1-141 (MRQRTIVCPL…RVTLSQKGLL (141 aa)) folds into the Nudix hydrolase domain. Residues 38–59 (GGVEPVERIEEALRREIREELG) carry the Nudix box motif.

The protein belongs to the Nudix hydrolase family. NudI subfamily. Monomer. The cofactor is Mg(2+).

The enzyme catalyses a ribonucleoside 5'-triphosphate + H2O = a ribonucleoside 5'-phosphate + diphosphate + H(+). It carries out the reaction a 2'-deoxyribonucleoside 5'-triphosphate + H2O = a 2'-deoxyribonucleoside 5'-phosphate + diphosphate + H(+). The catalysed reaction is dUTP + H2O = dUMP + diphosphate + H(+). It catalyses the reaction dTTP + H2O = dTMP + diphosphate + H(+). The enzyme catalyses dCTP + H2O = dCMP + diphosphate + H(+). Functionally, catalyzes the hydrolysis of nucleoside triphosphates, with a preference for pyrimidine deoxynucleoside triphosphates (dUTP, dTTP and dCTP). The sequence is that of Nucleoside triphosphatase NudI from Klebsiella pneumoniae (strain 342).